The chain runs to 309 residues: Aspartate carbamoyltransferase catalytic subunit (309 aa).

2 residues coordinate carbamoyl phosphate: Arg-58 and Thr-59. Lys-86 is an L-aspartate binding site. 3 residues coordinate carbamoyl phosphate: Arg-108, His-136, and Gln-139. Residues Arg-169 and Arg-223 each contribute to the L-aspartate site. 2 residues coordinate carbamoyl phosphate: Gly-264 and Pro-265.

This sequence belongs to the aspartate/ornithine carbamoyltransferase superfamily. ATCase family. As to quaternary structure, heterododecamer (2C3:3R2) of six catalytic PyrB chains organized as two trimers (C3), and six regulatory PyrI chains organized as three dimers (R2).

The catalysed reaction is carbamoyl phosphate + L-aspartate = N-carbamoyl-L-aspartate + phosphate + H(+). The protein operates within pyrimidine metabolism; UMP biosynthesis via de novo pathway; (S)-dihydroorotate from bicarbonate: step 2/3. Its function is as follows. Catalyzes the condensation of carbamoyl phosphate and aspartate to form carbamoyl aspartate and inorganic phosphate, the committed step in the de novo pyrimidine nucleotide biosynthesis pathway. This Pelotomaculum thermopropionicum (strain DSM 13744 / JCM 10971 / SI) protein is Aspartate carbamoyltransferase catalytic subunit.